The following is a 357-amino-acid chain: Peptide chain release factor 1 (357 aa).

Residue Gln-234 is modified to N5-methylglutamine.

Belongs to the prokaryotic/mitochondrial release factor family. In terms of processing, methylated by PrmC. Methylation increases the termination efficiency of RF1.

It localises to the cytoplasm. Functionally, peptide chain release factor 1 directs the termination of translation in response to the peptide chain termination codons UAG and UAA. This is Peptide chain release factor 1 from Chlorobaculum tepidum (strain ATCC 49652 / DSM 12025 / NBRC 103806 / TLS) (Chlorobium tepidum).